The primary structure comprises 1462 residues: FYVE, RhoGEF and PH domain-containing protein 5 (1462 aa).

6 disordered regions span residues 37-323 (GRLP…SAEE), 492-512 (YVPE…APGI), 592-613 (SGSF…SSMV), 670-718 (HVDV…ASES), 746-777 (EDRS…YENI), and 851-887 (CPIS…THKV). The span at 72-82 (PLREDEPKDEG) shows a compositional bias: basic and acidic residues. 2 stretches are compositionally biased toward acidic residues: residues 95-106 (SAEEEEEREEGG) and 137-151 (EGTD…EGCA). The segment covering 161–177 (SRSEEEEKLVQPHRECS) has biased composition (basic and acidic residues). Composition is skewed to acidic residues over residues 211 to 220 (GEAEEDDEEG) and 242 to 255 (MGQD…EPPE). The segment covering 592-611 (SGSFSQRNHLPSSGTSTPSS) has biased composition (polar residues). A compositionally biased stretch (low complexity) spans 676–685 (SSSRSSSESS). Residues 858-887 (PKEDLTSDEEQRSSEEEDSASRDPSVTHKV) show a composition bias toward basic and acidic residues. The 193-residue stretch at 892–1084 (RALVIAQELL…SKVTDRANDS (193 aa)) folds into the DH domain. The PH 1 domain occupies 1113–1207 (EFLKEGTLMK…WYGCLSRALP (95 aa)). The FYVE-type zinc finger occupies 1242-1301 (VTHVMMCMNCGCDFSLTLRRHHCHACGKIVCRNCSRNKYPLKYLKDRMAKVCDGCFGELK). C1248, C1251, C1264, C1267, C1272, C1275, C1293, and C1296 together coordinate Zn(2+). The 99-residue stretch at 1363–1461 (GSAISGYLSR…WIEAMEDASV (99 aa)) folds into the PH 2 domain.

In terms of tissue distribution, expressed in endothelial cells (at protein level).

The protein resides in the cytoplasm. The protein localises to the cytoskeleton. Its subcellular location is the cell projection. It is found in the ruffle membrane. It localises to the endoplasmic reticulum. The protein resides in the golgi apparatus. The protein localises to the early endosome. Functionally, activates CDC42, a member of the Ras-like family of Rho- and Rac proteins, by exchanging bound GDP for free GTP. Mediates VEGF-induced CDC42 activation. May regulate proangiogenic action of VEGF in vascular endothelial cells, including network formation, directional movement and proliferation. May play a role in regulating the actin cytoskeleton and cell shape. The protein is FYVE, RhoGEF and PH domain-containing protein 5 (FGD5) of Homo sapiens (Human).